The following is a 218-amino-acid chain: Replication protein RepB (218 aa).

The tract at residues 1-26 (MKSESKIDWTVPRPNKNPKTKQPYKR) is disordered. Basic residues predominate over residues 16 to 26 (KNPKTKQPYKR).

Belongs to the Gram-positive plasmids replication protein type 2 family.

Its function is as follows. Is essential for plasmid replication. Nicks the positive strand at the plus origin of replication. The sequence is that of Replication protein RepB (repB) from Lactiplantibacillus plantarum (Lactobacillus plantarum).